Here is a 197-residue protein sequence, read N- to C-terminus: MSRYRGPRLKKIRRLGALPGLTNKSPRAIRDLRNNSRSEYRIRLEEKQKLRFHYGLTEKQLINYVQIARKAKGSTGKVLLQLLEMRLDNILFRLGMASTIXAARQLVNHRHVLVNGRLVNRPSYRCKPHDIIMPKNTTKSGVLVQNSLELFTGKELANHLNLFSTPYKGLVNKIVDTNWIGLKINELLVVEYYSRQA.

Residues 85–161 (MRLDNILFRL…TGKELANHLN (77 aa)) form the S4 RNA-binding domain.

The protein belongs to the universal ribosomal protein uS4 family. As to quaternary structure, part of the 30S ribosomal subunit. Contacts protein S5. The interaction surface between S4 and S5 is involved in control of translational fidelity.

It is found in the plastid. One of the primary rRNA binding proteins, it binds directly to 16S rRNA where it nucleates assembly of the body of the 30S subunit. In terms of biological role, with S5 and S12 plays an important role in translational accuracy. This Cuscuta sandwichiana (Kauna'oa) protein is Small ribosomal subunit protein uS4c (rps4).